Reading from the N-terminus, the 724-residue chain is Protein Aster-A (724 aa).

Low complexity predominate over residues 1-18 (MFDTTPHSGRSTPSSSPS). Positions 1–66 (MFDTTPHSGR…TPSTQSLGSR (66 aa)) are disordered. The segment covering 57-66 (TPSTQSLGSR) has biased composition (polar residues). Residues 91–158 (EDFRKLFSKL…KEVTCLKKEK (68 aa)) form the GRAM domain. The tract at residues 256 to 336 (SSGAADRSQE…GPTTLGPLDL (81 aa)) is disordered. A phosphoserine mark is found at Ser263, Ser267, and Ser271. Polar residues predominate over residues 300–312 (DSQPDASSSQTVT). The segment covering 326 to 336 (DGPTTLGPLDL) has biased composition (low complexity). A VASt domain is found at 367–538 (SGRLLINSVF…ELAKAEKLSL (172 aa)). Ser415 carries the post-translational modification Phosphoserine. The segment at 560–579 (SWRAHGDGPQHPDPDPCARA) is disordered. The span at 563-575 (AHGDGPQHPDPDP) shows a compositional bias: basic and acidic residues. Residues 610 to 630 (LISIVICVSLIILIALNVLLF) traverse the membrane as a helical segment.

As to expression, expressed in liver.

The protein resides in the endoplasmic reticulum membrane. The protein localises to the cell membrane. It is found in the cytoplasmic vesicle. It localises to the autophagosome. Cholesterol transporter that mediates non-vesicular transport of cholesterol from the plasma membrane (PM) to the endoplasmic reticulum (ER). Contains unique domains for binding cholesterol and the PM, thereby serving as a molecular bridge for the transfer of cholesterol from the PM to the ER. Plays a crucial role in cholesterol homeostasis and has the unique ability to localize to the PM based on the level of membrane cholesterol. In lipid-poor conditions localizes to the ER membrane and in response to excess cholesterol in the PM is recruited to the endoplasmic reticulum-plasma membrane contact sites (EPCS) which is mediated by the GRAM domain. At the EPCS, the sterol-binding VASt/ASTER domain binds to the cholesterol in the PM and facilitates its transfer from the PM to ER. May play a role in tumor progression. Plays a role in autophagy regulation and is required for biogenesis of the autophagosome. This function in autophagy requires its cholesterol-transfer activity. The polypeptide is Protein Aster-A (Homo sapiens (Human)).